A 270-amino-acid chain; its full sequence is Putative phosphoenolpyruvate synthase regulatory protein (270 aa).

ADP is bound at residue 150–157 (GVSRCGKT).

The protein belongs to the pyruvate, phosphate/water dikinase regulatory protein family. PSRP subfamily.

The enzyme catalyses [pyruvate, water dikinase] + ADP = [pyruvate, water dikinase]-phosphate + AMP + H(+). It catalyses the reaction [pyruvate, water dikinase]-phosphate + phosphate + H(+) = [pyruvate, water dikinase] + diphosphate. Its function is as follows. Bifunctional serine/threonine kinase and phosphorylase involved in the regulation of the phosphoenolpyruvate synthase (PEPS) by catalyzing its phosphorylation/dephosphorylation. This is Putative phosphoenolpyruvate synthase regulatory protein from Shewanella loihica (strain ATCC BAA-1088 / PV-4).